The sequence spans 391 residues: MVEADRPGKLFIGGLNTETNEKALEAVFGKYGRIVEVLLMKDRETNKSRGFAFVTFESPADAKDAARDMNGKSLDGKAIKVEQATKPSFESGRRGPPPPPRSRGPPRGLRGGRGGSGGTRGPPSRGGHMDDGGYSMNFNMSSSRGPLPVKRGPPPRSGGPPPKRSAPSGPVRSSSGMGGRAPVSRGRDSYGGPPRREPLPSRRDVYLSPRDDGYSTKDSYSSRDYPSSRDTRDYAPPPRDYTYRDYGHSSSRDDYPSRGYSDRDGYGRDRDYSDHPSGGSYRDSYESYGNSRSAPPTRGPPPSYGGSSRYDDYSSSRDGYGGSRDSYSSSRSDLYSSGRDRVGRQERGLPPSMERGYPPPRDSYSSSSRGAPRGGGRGGSRSDRGGGRSRY.

Met1 bears the N-acetylmethionine; in Heterogeneous nuclear ribonucleoprotein G; alternate mark. Val2 carries the post-translational modification N-acetylvaline; in Heterogeneous nuclear ribonucleoprotein G, N-terminally processed. The 79-residue stretch at 8–86 folds into the RRM domain; that stretch reads GKLFIGGLNT…KAIKVEQATK (79 aa). A Glycyl lysine isopeptide (Lys-Gly) (interchain with G-Cter in SUMO2) cross-link involves residue Lys22. Lys30 carries the post-translational modification N6-acetyllysine. The span at 61–80 shows a compositional bias: basic and acidic residues; it reads DAKDAARDMNGKSLDGKAIK. Residues 61 to 391 are disordered; it reads DAKDAARDMN…SDRGGGRSRY (331 aa). Glycyl lysine isopeptide (Lys-Gly) (interchain with G-Cter in SUMO2) cross-links involve residues Lys80 and Lys86. A phosphoserine mark is found at Ser88 and Ser91. Residues 109-120 show a composition bias toward gly residues; sequence LRGGRGGSGGTR. 3 positions are modified to omega-N-methylarginine: Arg125, Arg144, and Arg164. Positions 151 to 164 are enriched in pro residues; sequence RGPPPRSGGPPPKR. Residue Ser165 is modified to Phosphoserine. Omega-N-methylarginine is present on Arg172. Residue Ser174 is modified to Phosphoserine. A necessary for the association to nascent RNAPII transcripts and nuclear localization region spans residues 186-236; that stretch reads GRDSYGGPPRREPLPSRRDVYLSPRDDGYSTKDSYSSRDYPSSRDTRDYAP. 2 stretches are compositionally biased toward basic and acidic residues: residues 194 to 215 and 241 to 274; these read PRRE…DGYS and YTYR…DYSD. A phosphoserine mark is found at Ser261, Ser328, Ser329, Ser330, and Ser332. Residues 323 to 337 show a composition bias toward low complexity; it reads SRDSYSSSRSDLYSS. The necessary for RNA-binding stretch occupies residues 333–391; that stretch reads DLYSSGRDRVGRQERGLPPSMERGYPPPRDSYSSSSRGAPRGGGRGGSRSDRGGGRSRY. Residues 338–347 show a composition bias toward basic and acidic residues; it reads GRDRVGRQER. Ser352 carries the post-translational modification Phosphoserine. Residues 362 to 371 show a composition bias toward low complexity; the sequence is DSYSSSSRGA. Positions 380–391 are enriched in basic and acidic residues; sequence SRSDRGGGRSRY.

Homomultimer. Found in the supraspliceosome complex. Identified in the spliceosome C complex. Forms a complex with ILF2, ILF3, YLPM1, KHDRBS1, NCOA5 and PPP1CA. Interacts with CLK2, KHDRBS2, KHDRBS3, SAFB/SAFB1, TRA2B and YTHDC1. Interacts with ERAP1; the interaction is RNA-independent. Interacts with PPIA/CYPA. Post-translationally, O-glycosylated. In terms of processing, arg-185 is dimethylated, probably to asymmetric dimethylarginine.

Its subcellular location is the nucleus. In terms of biological role, RNA-binding protein that plays several role in the regulation of pre- and post-transcriptional processes. Implicated in tissue-specific regulation of gene transcription and alternative splicing of several pre-mRNAs. Binds to and stimulates transcription from the tumor suppressor TXNIP gene promoter; may thus be involved in tumor suppression. When associated with SAFB, binds to and stimulates transcription from the SREBF1 promoter. Associates with nascent mRNAs transcribed by RNA polymerase II. Component of the supraspliceosome complex that regulates pre-mRNA alternative splice site selection. Can either activate or suppress exon inclusion; acts additively with TRA2B to promote exon 7 inclusion of the survival motor neuron SMN2. Represses the splicing of MAPT/Tau exon 10. Binds preferentially to single-stranded 5'-CC[A/C]-rich RNA sequence motifs localized in a single-stranded conformation; probably binds RNA as a homodimer. Binds non-specifically to pre-mRNAs. Also plays a role in the cytoplasmic TNFR1 trafficking pathways; promotes both the IL-1-beta-mediated inducible proteolytic cleavage of TNFR1 ectodomains and the release of TNFR1 exosome-like vesicles to the extracellular compartment. The chain is RNA-binding motif protein, X chromosome (RBMX) from Pan troglodytes (Chimpanzee).